Consider the following 216-residue polypeptide: Cytidylate kinase (216 aa).

Residue 10-18 (GPAAAGKST) coordinates ATP.

The protein belongs to the cytidylate kinase family. Type 1 subfamily.

The protein resides in the cytoplasm. It carries out the reaction CMP + ATP = CDP + ADP. The catalysed reaction is dCMP + ATP = dCDP + ADP. The protein is Cytidylate kinase of Macrococcus caseolyticus (strain JCSC5402) (Macrococcoides caseolyticum).